The following is a 344-amino-acid chain: Follistatin (344 aa).

The N-terminal stretch at 1 to 29 (MARPRHQPGGLCLLLLLLCQFMEDRSAQA) is a signal peptide. A TB domain is found at 30-103 (GNCWLRQAKN…TCENVDCGPG (74 aa)). Intrachain disulfides connect cysteine 32–cysteine 55, cysteine 42–cysteine 88, cysteine 56–cysteine 91, cysteine 95–cysteine 106, cysteine 100–cysteine 116, cysteine 118–cysteine 150, cysteine 122–cysteine 143, cysteine 132–cysteine 164, cysteine 168–cysteine 179, cysteine 173–cysteine 189, cysteine 192–cysteine 225, cysteine 196–cysteine 218, cysteine 207–cysteine 239, cysteine 245–cysteine 256, cysteine 250–cysteine 267, cysteine 270–cysteine 302, cysteine 274–cysteine 295, and cysteine 284–cysteine 316. Residues 94–117 (TCENVDCGPGKKCRMNKKNKPRCV) enclose the Follistatin-like 1 domain. A Kazal-like 1 domain is found at 112-166 (NKPRCVCAPDCSNITWKGLVCGLDGKTYRNECALLKARCKEQPELQVQYQGKCKK). Asparagine 124 carries N-linked (GlcNAc...) asparagine glycosylation. Residues 167 to 190 (TCRDVFCPGSSTCVVDQTNNAYCV) enclose the Follistatin-like 2 domain. The Kazal-like 2 domain occupies 186–241 (NAYCVTCNRICPEPTSSEQYLCGNDGVTYPSACHLRKATCLLGRSIGLAYEGKCIK). The region spanning 244–268 (SCDDIQCTGGKKCLWDFKVGRGRCS) is the Follistatin-like 3 domain. The Kazal-like 3 domain maps to 261–318 (KVGRGRCSLCGELCPESKSEEPVCASDNATYASECAMKEAACSSGVLLEVKHSGSCNS). N-linked (GlcNAc...) asparagine glycosylation occurs at asparagine 288. The segment at 316–344 (CNSISEDTEDEEEDEDQDYSFPISSILEW) is disordered. The span at 321 to 333 (EDTEDEEEDEDQD) shows a compositional bias: acidic residues.

Monomer.

The protein resides in the secreted. Functionally, binds directly to activin and functions as an activin antagonist. Specific inhibitor of the biosynthesis and secretion of pituitary follicle stimulating hormone (FSH). This is Follistatin from Bubalus bubalis (Domestic water buffalo).